The chain runs to 169 residues: Cell division inhibitor SulA (169 aa).

The ftsZ binding stretch occupies residues 106–112; the sequence is ALRTGNY. A lon protease binding region spans residues 162–169; that stretch reads KIHSNLYH.

This sequence belongs to the SulA family. Interacts with FtsZ. In terms of processing, is rapidly cleaved and degraded by the Lon protease once DNA damage is repaired.

In terms of biological role, component of the SOS system and an inhibitor of cell division. Accumulation of SulA causes rapid cessation of cell division and the appearance of long, non-septate filaments. In the presence of GTP, binds a polymerization-competent form of FtsZ in a 1:1 ratio, thus inhibiting FtsZ polymerization and therefore preventing it from participating in the assembly of the Z ring. This mechanism prevents the premature segregation of damaged DNA to daughter cells during cell division. This Escherichia coli O81 (strain ED1a) protein is Cell division inhibitor SulA.